Consider the following 725-residue polypeptide: Malate synthase G 2 (725 aa).

Residues Val118, 125-126, Ser276, and Arg313 each bind acetyl-CoA; that span reads RY. Catalysis depends on Arg340, which acts as the Proton acceptor. Glyoxylate contacts are provided by residues Arg340, Glu429, and 454–457; that span reads GFLD. Mg(2+) contacts are provided by Glu429 and Asp457. Pro538 is a binding site for acetyl-CoA. Cys619 bears the Cysteine sulfenic acid (-SOH) mark. The active-site Proton donor is Asp633.

This sequence belongs to the malate synthase family. GlcB subfamily. Monomer. It depends on Mg(2+) as a cofactor.

It localises to the cytoplasm. It catalyses the reaction glyoxylate + acetyl-CoA + H2O = (S)-malate + CoA + H(+). It participates in carbohydrate metabolism; glyoxylate cycle; (S)-malate from isocitrate: step 2/2. Involved in the glycolate utilization. Catalyzes the condensation and subsequent hydrolysis of acetyl-coenzyme A (acetyl-CoA) and glyoxylate to form malate and CoA. This is Malate synthase G 2 from Pseudomonas syringae pv. tomato (strain ATCC BAA-871 / DC3000).